The following is a 1165-amino-acid chain: ATP-dependent helicase/deoxyribonuclease subunit B (1165 aa).

The 298-residue stretch at Met1 to Arg298 folds into the UvrD-like helicase ATP-binding domain. Residue Gly8–Thr15 participates in ATP binding. Residues Pro279–Asp584 enclose the UvrD-like helicase C-terminal domain. Residues Cys800, Cys1119, Cys1122, and Cys1128 each coordinate [4Fe-4S] cluster.

The protein belongs to the helicase family. AddB/RexB type 1 subfamily. Heterodimer of AddA and AddB. The cofactor is Mg(2+). [4Fe-4S] cluster is required as a cofactor.

In terms of biological role, the heterodimer acts as both an ATP-dependent DNA helicase and an ATP-dependent, dual-direction single-stranded exonuclease. Recognizes the chi site generating a DNA molecule suitable for the initiation of homologous recombination. The AddB subunit has 5' -&gt; 3' nuclease activity but not helicase activity. In Desulforudis audaxviator (strain MP104C), this protein is ATP-dependent helicase/deoxyribonuclease subunit B.